The following is a 640-amino-acid chain: 1-deoxy-D-xylulose-5-phosphate synthase (640 aa).

Residues H79 and 120–122 (AHA) each bind thiamine diphosphate. D151 lines the Mg(2+) pocket. Thiamine diphosphate-binding positions include 152–153 (GS), N180, Y287, and E369. Mg(2+) is bound at residue N180.

It belongs to the transketolase family. DXPS subfamily. Homodimer. Mg(2+) is required as a cofactor. It depends on thiamine diphosphate as a cofactor.

It carries out the reaction D-glyceraldehyde 3-phosphate + pyruvate + H(+) = 1-deoxy-D-xylulose 5-phosphate + CO2. The protein operates within metabolic intermediate biosynthesis; 1-deoxy-D-xylulose 5-phosphate biosynthesis; 1-deoxy-D-xylulose 5-phosphate from D-glyceraldehyde 3-phosphate and pyruvate: step 1/1. In terms of biological role, catalyzes the acyloin condensation reaction between C atoms 2 and 3 of pyruvate and glyceraldehyde 3-phosphate to yield 1-deoxy-D-xylulose-5-phosphate (DXP). This is 1-deoxy-D-xylulose-5-phosphate synthase from Hyphomonas neptunium (strain ATCC 15444).